Reading from the N-terminus, the 345-residue chain is GTP 3',8-cyclase (345 aa).

The region spanning 10 to 236 is the Radical SAM core domain; that stretch reads SHGRPLGVLR…QCVSSHWPLD (227 aa). R19 contacts GTP. Positions 26 and 30 each coordinate [4Fe-4S] cluster. Residue Y32 coordinates S-adenosyl-L-methionine. C33 lines the [4Fe-4S] cluster pocket. R65 lines the GTP pocket. G69 lines the S-adenosyl-L-methionine pocket. A GTP-binding site is contributed by T98. An S-adenosyl-L-methionine-binding site is contributed by S123. Residue K172 participates in GTP binding. Residue M206 participates in S-adenosyl-L-methionine binding. Positions 269 and 272 each coordinate [4Fe-4S] cluster. 274-276 serves as a coordination point for GTP; the sequence is RIR. [4Fe-4S] cluster is bound at residue C286.

The protein belongs to the radical SAM superfamily. MoaA family. In terms of assembly, monomer and homodimer. Requires [4Fe-4S] cluster as cofactor.

It carries out the reaction GTP + AH2 + S-adenosyl-L-methionine = (8S)-3',8-cyclo-7,8-dihydroguanosine 5'-triphosphate + 5'-deoxyadenosine + L-methionine + A + H(+). The protein operates within cofactor biosynthesis; molybdopterin biosynthesis. In terms of biological role, catalyzes the cyclization of GTP to (8S)-3',8-cyclo-7,8-dihydroguanosine 5'-triphosphate. This Synechococcus sp. (strain CC9902) protein is GTP 3',8-cyclase.